Here is a 151-residue protein sequence, read N- to C-terminus: MKKAERQRLIKQLIMQQEIETQDELITRLEEIGVRATQATVSRDIREMSIVKTHGADGRVKYAIFSQAQGTSSEEKLRESVKDSVVRMERVQFIVILHTEMGNADVVSNFLDEVAYPEVAGTVAGADTIIVITRSEEDAEHFIERIENMIF.

The protein belongs to the ArgR family.

The protein resides in the cytoplasm. It functions in the pathway amino-acid biosynthesis; L-arginine biosynthesis [regulation]. Its function is as follows. Regulates arginine biosynthesis genes. The polypeptide is Arginine repressor (Enterococcus faecalis (strain ATCC 700802 / V583)).